A 744-amino-acid chain; its full sequence is Phosphoribosylformylglycinamidine synthase subunit PurL (744 aa).

The active site involves histidine 45. ATP contacts are provided by tyrosine 48 and lysine 87. Glutamate 89 is a binding site for Mg(2+). Substrate contacts are provided by residues 90–93 (SHNH) and arginine 112. Catalysis depends on histidine 91, which acts as the Proton acceptor. Mg(2+) is bound at residue aspartate 113. Glutamine 236 provides a ligand contact to substrate. Aspartate 264 contributes to the Mg(2+) binding site. A substrate-binding site is contributed by 308 to 310 (ESQ). The ATP site is built by asparagine 492 and glycine 529. Asparagine 530 contributes to the Mg(2+) binding site. Residue serine 532 coordinates substrate.

This sequence belongs to the FGAMS family. As to quaternary structure, monomer. Part of the FGAM synthase complex composed of 1 PurL, 1 PurQ and 2 PurS subunits.

The protein localises to the cytoplasm. The catalysed reaction is N(2)-formyl-N(1)-(5-phospho-beta-D-ribosyl)glycinamide + L-glutamine + ATP + H2O = 2-formamido-N(1)-(5-O-phospho-beta-D-ribosyl)acetamidine + L-glutamate + ADP + phosphate + H(+). Its pathway is purine metabolism; IMP biosynthesis via de novo pathway; 5-amino-1-(5-phospho-D-ribosyl)imidazole from N(2)-formyl-N(1)-(5-phospho-D-ribosyl)glycinamide: step 1/2. Part of the phosphoribosylformylglycinamidine synthase complex involved in the purines biosynthetic pathway. Catalyzes the ATP-dependent conversion of formylglycinamide ribonucleotide (FGAR) and glutamine to yield formylglycinamidine ribonucleotide (FGAM) and glutamate. The FGAM synthase complex is composed of three subunits. PurQ produces an ammonia molecule by converting glutamine to glutamate. PurL transfers the ammonia molecule to FGAR to form FGAM in an ATP-dependent manner. PurS interacts with PurQ and PurL and is thought to assist in the transfer of the ammonia molecule from PurQ to PurL. The chain is Phosphoribosylformylglycinamidine synthase subunit PurL from Erythrobacter litoralis (strain HTCC2594).